The primary structure comprises 698 residues: Probable xyloglucan glycosyltransferase 2 (698 aa).

2 helical membrane-spanning segments follow: residues 124-144 (GFLA…WNGW) and 190-210 (ILLF…CFWI). Residue aspartate 272 is part of the active site. Substrate-binding residues include aspartate 331 and aspartate 333. Residue aspartate 425 is part of the active site. 4 consecutive transmembrane segments (helical) span residues 503–523 (LILP…TMFV), 528–548 (LPVW…ILPS), 653–668 (LALS…RSLL), and 673–693 (IHFY…LDLI).

Belongs to the glycosyltransferase 2 family. Plant cellulose synthase-like C subfamily.

Its subcellular location is the golgi apparatus membrane. Its function is as follows. Probable beta-1,4-glucan synthase rather involved in the synthesis of the xyloglucan backbone than cellulose. Seems to work simultaneously with xyloglucan 6-xylosyltransferase. Xyloglucan is a noncellulosic polysaccharides of plant cell wall and consists of a glucan backbone substituted by xylose, galactose and fucose. This is Probable xyloglucan glycosyltransferase 2 (CSLC2) from Oryza sativa subsp. japonica (Rice).